The chain runs to 223 residues: Ubiquitin carboxyl-terminal hydrolase isozyme L1 (223 aa).

Met1 is subject to N-acetylmethionine. The region spanning 2 to 221 (QLKPMEINPE…VRFSAVALCK (220 aa)) is the UCH catalytic domain. Residues 5–10 (PMEINP) are interaction with ubiquitin. The active-site Nucleophile is the Cys90. Ser125 carries the phosphoserine modification. His161 (proton donor) is an active-site residue. The segment at 211 to 216 (EVRFSA) is interaction with ubiquitin. Cys220 carries S-farnesyl cysteine lipidation. Residues 221 to 223 (KAA) constitute a propeptide, removed in mature form.

Belongs to the peptidase C12 family. Monomer. Homodimer. Interacts with COPS5 and SNCA. In terms of processing, O-glycosylated. Expressed in the placenta at all stages of pregnancy. Expression increases as pregnancy progresses.

It localises to the cytoplasm. The protein localises to the endoplasmic reticulum membrane. The protein resides in the nucleus. The enzyme catalyses Thiol-dependent hydrolysis of ester, thioester, amide, peptide and isopeptide bonds formed by the C-terminal Gly of ubiquitin (a 76-residue protein attached to proteins as an intracellular targeting signal).. Ubiquitin-protein hydrolase involved both in the processing of ubiquitin precursors and of ubiquitinated proteins. This enzyme is a thiol protease that recognizes and hydrolyzes a peptide bond at the C-terminal glycine of ubiquitin. Also binds to free monoubiquitin and may prevent its degradation in lysosomes. The homodimer may have ATP-independent ubiquitin ligase activity. The protein is Ubiquitin carboxyl-terminal hydrolase isozyme L1 (UCHL1) of Macaca fascicularis (Crab-eating macaque).